A 313-amino-acid chain; its full sequence is uncharacterized protein (313 aa).

This is an uncharacterized protein from Acanthamoeba polyphaga mimivirus (APMV).